The sequence spans 1194 residues: Peroxisomal ATPase PEX1 (1194 aa).

Residues 220-255 (KTRQRRMSHQGKSVKAKSLASTRHGKRRDDGSGPSG) are disordered. A compositionally biased stretch (basic residues) spans 221–234 (TRQRRMSHQGKSVK). Positions 538–730 (RSASVLLTGA…GPEPTLKIEK (193 aa)) are AAA-cassette D1. Residues 546 to 553 (GARGSGKT) and 849 to 856 (GYPGCGKT) contribute to the ATP site. The interval 844–1028 (GLLLYGYPGC…LYNAHLEAIH (185 aa)) is AAA-cassette D2. 3 disordered regions span residues 1062-1084 (YISF…LTNG), 1116-1139 (QVQQ…EPVI), and 1174-1194 (RSGE…SSLM). A compositionally biased stretch (polar residues) spans 1066-1084 (SMGNKDSTGEPSTQPLTNG). The segment covering 1116-1127 (QVQQQQSQTNQA) has biased composition (low complexity).

It belongs to the AAA ATPase family. As to quaternary structure, interacts with PEX6; forming the PEX1-PEX6 AAA ATPase complex, which is composed of a heterohexamer formed by a trimer of PEX1-PEX6 dimers.

It localises to the cytoplasm. The protein localises to the cytosol. Its subcellular location is the peroxisome membrane. The catalysed reaction is ATP + H2O = ADP + phosphate + H(+). In terms of biological role, component of the PEX1-PEX6 AAA ATPase complex, a protein dislocase complex that mediates the ATP-dependent extraction of the PEX5 receptor from peroxisomal membranes, an essential step for PEX5 recycling. Specifically recognizes PEX5 monoubiquitinated at 'Cys-6', and pulls it out of the peroxisome lumen through the PEX2-PEX10-PEX12 retrotranslocation channel. Extraction by the PEX1-PEX6 AAA ATPase complex is accompanied by unfolding of the TPR repeats and release of bound cargo from PEX5. Regulates autophagy and biogenesis of peroxisomes and Woronin bodies. Plays important roles in mycelial growth and development and stress response. Is also essential for conidiation and fatty acid utilization. Required for nematode predation via trap formation. This Arthrobotrys oligospora (strain ATCC 24927 / CBS 115.81 / DSM 1491) (Nematode-trapping fungus) protein is Peroxisomal ATPase PEX1.